A 594-amino-acid polypeptide reads, in one-letter code: DNA polymerase epsilon subunit B (594 aa).

This sequence belongs to the DNA polymerase epsilon subunit B family. In terms of assembly, heterotetramer. Consists of four subunits: pol2, dpb2, dpb3 and dpb4. Interacts with dpb3.

The protein localises to the nucleus. Its function is as follows. As accessory component of the DNA polymerase epsilon (DNA polymerase II) participates in chromosomal DNA replication. This Schizosaccharomyces pombe (strain 972 / ATCC 24843) (Fission yeast) protein is DNA polymerase epsilon subunit B (dpb2).